The primary structure comprises 87 residues: Apolipoprotein C-I (87 aa).

An N-terminal signal peptide occupies residues 1–26 (MRLFLSLPVLVVVLAMVLEGPAPAQA).

Belongs to the apolipoprotein C1 family.

Its subcellular location is the secreted. Inhibitor of lipoprotein binding to the low density lipoprotein (LDL) receptor, LDL receptor-related protein, and very low density lipoprotein (VLDL) receptor. Associates with high density lipoproteins (HDL) and the triacylglycerol-rich lipoproteins in the plasma and makes up about 10% of the protein of the VLDL and 2% of that of HDL. Appears to interfere directly with fatty acid uptake and is also the major plasma inhibitor of cholesteryl ester transfer protein (CETP). Binds free fatty acids and reduces their intracellular esterification. Modulates the interaction of APOE with beta-migrating VLDL and inhibits binding of beta-VLDL to the LDL receptor-related protein. This is Apolipoprotein C-I (APOC1) from Zalophus californianus (California sealion).